Here is a 241-residue protein sequence, read N- to C-terminus: Methylosome subunit pICln (241 aa).

A disordered region spans residues 88 to 112 (EDKEAHMADQEEEESEDDDDDEEPI). The span at 97-112 (QEEEESEDDDDDEEPI) shows a compositional bias: acidic residues.

This sequence belongs to the pICln (TC 1.A.47) family. Component of the methylosome, a 20S complex containing at least clns1a/picln, prmt5/skb1 and wdr77/mep50; may mediate snrpd1 and snrpd3 methylation. Forms a 6S pICln-Sm complex composed of clns1a/picln, snrpd1, snrpd2, snrpe, snrpf and snrpg; ring-like structure where clns1a/pICln mimics additional Sm proteins and which is unable to assemble into the core snRNP.

The protein resides in the cytoplasm. Its subcellular location is the cytosol. It localises to the nucleus. It is found in the cytoskeleton. Involved in both the assembly of spliceosomal snRNPs and the methylation of Sm proteins. Chaperone that regulates the assembly of spliceosomal U1, U2, U4 and U5 small nuclear ribonucleoproteins (snRNPs), the building blocks of the spliceosome, and thereby plays an important role in the splicing of cellular pre-mRNAs. Most spliceosomal snRNPs contain a common set of Sm proteins SNRPB, SNRPD1, SNRPD2, SNRPD3, SNRPE, SNRPF and SNRPG that assemble in a heptameric protein ring on the Sm site of the small nuclear RNA to form the core snRNP (Sm core). In the cytosol, the Sm proteins SNRPD1, SNRPD2, SNRPE, SNRPF and SNRPG are trapped in an inactive 6S pICln-Sm complex by the chaperone CLNS1A that controls the assembly of the core snRNP. Dissociation by the SMN complex of CLNS1A from the trapped Sm proteins and their transfer to an SMN-Sm complex triggers the assembly of core snRNPs and their transport to the nucleus. This Xenopus laevis (African clawed frog) protein is Methylosome subunit pICln (clns1a).